The primary structure comprises 358 residues: tRNA-specific 2-thiouridylase MnmA (358 aa).

Residues 6 to 13 and Met-32 each bind ATP; that span reads ALSGGVDS. The Nucleophile role is filled by Cys-103. Residues Cys-103 and Cys-201 are joined by a disulfide bond. Residue Gly-127 participates in ATP binding. The interval 151-153 is interaction with tRNA; that stretch reads KDQ. The active-site Cysteine persulfide intermediate is Cys-201.

It belongs to the MnmA/TRMU family.

It localises to the cytoplasm. It catalyses the reaction S-sulfanyl-L-cysteinyl-[protein] + uridine(34) in tRNA + AH2 + ATP = 2-thiouridine(34) in tRNA + L-cysteinyl-[protein] + A + AMP + diphosphate + H(+). Catalyzes the 2-thiolation of uridine at the wobble position (U34) of tRNA, leading to the formation of s(2)U34. The sequence is that of tRNA-specific 2-thiouridylase MnmA from Thermotoga petrophila (strain ATCC BAA-488 / DSM 13995 / JCM 10881 / RKU-1).